The chain runs to 95 residues: Embryonic abundant protein 1 (95 aa).

A compositionally biased stretch (polar residues) spans 1–10; sequence MASGQQQQGR. A disordered region spans residues 1 to 95; that stretch reads MASGQQQQGR…IDESKYKTKS (95 aa). 2 stretches are compositionally biased toward basic and acidic residues: residues 40–64 and 75–95; these read AEGR…EMGR and GGER…KTKS.

It belongs to the small hydrophilic plant seed protein family. Expressed in dry seeds and immature embryos.

Its function is as follows. Em protein may act as a cytoplasm protectant during desiccation. The polypeptide is Embryonic abundant protein 1 (EMP1) (Oryza sativa subsp. japonica (Rice)).